We begin with the raw amino-acid sequence, 271 residues long: Formamidopyrimidine-DNA glycosylase (271 aa).

P2 functions as the Schiff-base intermediate with DNA in the catalytic mechanism. The Proton donor role is filled by E3. K58 acts as the Proton donor; for beta-elimination activity in catalysis. DNA is bound by residues H90, R108, and R151. The FPG-type; degenerate zinc finger occupies Q236–R271. The Proton donor; for delta-elimination activity role is filled by R261.

The protein belongs to the FPG family. As to quaternary structure, monomer. It depends on Zn(2+) as a cofactor.

The catalysed reaction is Hydrolysis of DNA containing ring-opened 7-methylguanine residues, releasing 2,6-diamino-4-hydroxy-5-(N-methyl)formamidopyrimidine.. The enzyme catalyses 2'-deoxyribonucleotide-(2'-deoxyribose 5'-phosphate)-2'-deoxyribonucleotide-DNA = a 3'-end 2'-deoxyribonucleotide-(2,3-dehydro-2,3-deoxyribose 5'-phosphate)-DNA + a 5'-end 5'-phospho-2'-deoxyribonucleoside-DNA + H(+). Its function is as follows. Involved in base excision repair of DNA damaged by oxidation or by mutagenic agents. Acts as a DNA glycosylase that recognizes and removes damaged bases. Has a preference for oxidized purines, such as 7,8-dihydro-8-oxoguanine (8-oxoG). Has AP (apurinic/apyrimidinic) lyase activity and introduces nicks in the DNA strand. Cleaves the DNA backbone by beta-delta elimination to generate a single-strand break at the site of the removed base with both 3'- and 5'-phosphates. This chain is Formamidopyrimidine-DNA glycosylase, found in Erythrobacter litoralis (strain HTCC2594).